A 611-amino-acid polypeptide reads, in one-letter code: Probable cysteine desulfurase 1 (611 aa).

A cargo-loading domain region spans residues M1–Q208. At K428 the chain carries N6-(pyridoxal phosphate)lysine. C566 serves as the catalytic Cysteine persulfide intermediate.

The protein belongs to the class-V pyridoxal-phosphate-dependent aminotransferase family. Csd subfamily. In terms of assembly, there are 1-2 copies of this protein in each type 2A encapsulin shell. It depends on pyridoxal 5'-phosphate as a cofactor.

It is found in the encapsulin nanocompartment. It catalyses the reaction (sulfur carrier)-H + L-cysteine = (sulfur carrier)-SH + L-alanine. Cargo protein of a type 2A encapsulin nanocompartment involved in sulfur metabolism. Cysteine desulfurases mobilize the sulfur from L-cysteine to yield L-alanine, an essential step in sulfur metabolism for biosynthesis of a variety of sulfur-containing biomolecules. The sequence is that of Probable cysteine desulfurase 1 from Mycobacterium leprae (strain TN).